The primary structure comprises 98 residues: UPF0235 protein Ping_3043 (98 aa).

It belongs to the UPF0235 family.

This Psychromonas ingrahamii (strain DSM 17664 / CCUG 51855 / 37) protein is UPF0235 protein Ping_3043.